Consider the following 553-residue polypeptide: Formate--tetrahydrofolate ligase (553 aa).

62 to 69 (TPAGEGKS) is an ATP binding site.

The protein belongs to the formate--tetrahydrofolate ligase family.

It catalyses the reaction (6S)-5,6,7,8-tetrahydrofolate + formate + ATP = (6R)-10-formyltetrahydrofolate + ADP + phosphate. It participates in one-carbon metabolism; tetrahydrofolate interconversion. In Limosilactobacillus reuteri subsp. reuteri (strain JCM 1112) (Lactobacillus reuteri), this protein is Formate--tetrahydrofolate ligase.